A 465-amino-acid polypeptide reads, in one-letter code: GTPase Der (465 aa).

EngA-type G domains follow at residues 3 to 167 and 179 to 352; these read PLVA…PERG and IHIA…VSAL. GTP is bound by residues 9–16, 57–61, 119–122, 185–192, 232–236, and 297–300; these read GRPNVGKS, DTGGM, NKID, DTAGL, and NKWD. The KH-like domain maps to 353–437; sequence RQFSTSEVNK…PVRFLFREGD (85 aa).

Belongs to the TRAFAC class TrmE-Era-EngA-EngB-Septin-like GTPase superfamily. EngA (Der) GTPase family. As to quaternary structure, associates with the 50S ribosomal subunit.

Functionally, GTPase that plays an essential role in the late steps of ribosome biogenesis. This is GTPase Der from Xylella fastidiosa (strain 9a5c).